A 206-amino-acid chain; its full sequence is uncharacterized protein (206 aa).

The helical transmembrane segment at 4–24 (LLVVIAVALFIAAIVVLVVAI) threads the bilayer.

The protein localises to the membrane. This is an uncharacterized protein from Mycobacterium tuberculosis (strain CDC 1551 / Oshkosh).